A 493-amino-acid chain; its full sequence is Cysteine--tRNA ligase (493 aa).

C29 provides a ligand contact to Zn(2+). The 'HIGH' region motif lies at 31-41 (VTVYDYCHIGH). The Zn(2+) site is built by C209, H234, and E238. Residues 266–270 (KMSKS) carry the 'KMSKS' region motif. K269 is an ATP binding site.

It belongs to the class-I aminoacyl-tRNA synthetase family. Monomer. Zn(2+) is required as a cofactor.

It is found in the cytoplasm. It catalyses the reaction tRNA(Cys) + L-cysteine + ATP = L-cysteinyl-tRNA(Cys) + AMP + diphosphate. This chain is Cysteine--tRNA ligase, found in Pelobacter propionicus (strain DSM 2379 / NBRC 103807 / OttBd1).